The sequence spans 521 residues: uncharacterized protein (521 aa).

10 consecutive transmembrane segments (helical) span residues 103-123 (NLML…VPMP), 136-156 (FWFF…LWIT), 177-197 (YILF…FTAW), 200-220 (ITFT…GISF), 259-279 (AYAH…VYIV), 299-319 (IMYV…SSWI), 327-346 (YALV…VYVR), 358-378 (FVLV…LITM), 411-431 (CVAS…LHFG), and 450-470 (FKLT…ASYL).

Its subcellular location is the membrane. This is an uncharacterized protein from Schizosaccharomyces pombe (strain 972 / ATCC 24843) (Fission yeast).